The chain runs to 218 residues: Putative inactive cathepsin L-like protein CTSL3P (218 aa).

2 disordered regions span residues 144–173 (GDWK…EVAQ) and 195–218 (GDED…EAQV). Basic and acidic residues predominate over residues 201–212 (EDKWPHDMRNHL).

It belongs to the peptidase C1 family.

The polypeptide is Putative inactive cathepsin L-like protein CTSL3P (CTSL3P) (Homo sapiens (Human)).